We begin with the raw amino-acid sequence, 58 residues long: Small ribosomal subunit protein bS21 (58 aa).

Belongs to the bacterial ribosomal protein bS21 family.

The sequence is that of Small ribosomal subunit protein bS21 from Picosynechococcus sp. (strain ATCC 27264 / PCC 7002 / PR-6) (Agmenellum quadruplicatum).